The primary structure comprises 236 residues: Orotidine 5'-phosphate decarboxylase (236 aa).

Substrate is bound by residues aspartate 13, lysine 35, 62–71 (DLKFYDIPQT), threonine 123, arginine 184, glutamine 193, glycine 213, and arginine 214. Lysine 64 (proton donor) is an active-site residue.

The protein belongs to the OMP decarboxylase family. Type 1 subfamily. In terms of assembly, homodimer.

The enzyme catalyses orotidine 5'-phosphate + H(+) = UMP + CO2. It functions in the pathway pyrimidine metabolism; UMP biosynthesis via de novo pathway; UMP from orotate: step 2/2. Catalyzes the decarboxylation of orotidine 5'-monophosphate (OMP) to uridine 5'-monophosphate (UMP). This is Orotidine 5'-phosphate decarboxylase from Coxiella burnetii (strain CbuK_Q154) (Coxiella burnetii (strain Q154)).